The sequence spans 443 residues: Threonine/serine transporter TdcC (443 aa).

11 consecutive transmembrane segments (helical) span residues 22–42 (TTWT…FFPI), 44–64 (AGFG…PIAF), 97–117 (GVVI…IYGV), 140–160 (FVAL…KDLM), 163–183 (VMSY…LSLI), 207–227 (ILIT…FSPI), 261–281 (MLMV…LSPA), 311–331 (FAIT…FKSF), 366–386 (LSMI…PNIL), 389–409 (IEAM…MYAI), and 423–443 (DNVF…YKLF).

The protein belongs to the amino acid/polyamine transporter 2 family. SdaC/TdcC subfamily.

The protein localises to the cell inner membrane. The catalysed reaction is L-threonine(in) + H(+)(in) = L-threonine(out) + H(+)(out). It carries out the reaction L-serine(in) + H(+)(in) = L-serine(out) + H(+)(out). Functionally, involved in the import of threonine and serine into the cell, with the concomitant import of a proton (symport system). The chain is Threonine/serine transporter TdcC from Shigella flexneri serotype 5b (strain 8401).